The following is a 349-amino-acid chain: S-adenosylmethionine:tRNA ribosyltransferase-isomerase (349 aa).

The protein belongs to the QueA family. In terms of assembly, monomer.

It localises to the cytoplasm. The catalysed reaction is 7-aminomethyl-7-carbaguanosine(34) in tRNA + S-adenosyl-L-methionine = epoxyqueuosine(34) in tRNA + adenine + L-methionine + 2 H(+). It functions in the pathway tRNA modification; tRNA-queuosine biosynthesis. Functionally, transfers and isomerizes the ribose moiety from AdoMet to the 7-aminomethyl group of 7-deazaguanine (preQ1-tRNA) to give epoxyqueuosine (oQ-tRNA). The polypeptide is S-adenosylmethionine:tRNA ribosyltransferase-isomerase (Pseudomonas fluorescens (strain SBW25)).